The sequence spans 179 residues: Large ribosomal subunit protein uL5 (179 aa).

It belongs to the universal ribosomal protein uL5 family. In terms of assembly, part of the 50S ribosomal subunit; part of the 5S rRNA/L5/L18/L25 subcomplex. Contacts the 5S rRNA and the P site tRNA. Forms a bridge to the 30S subunit in the 70S ribosome.

In terms of biological role, this is one of the proteins that bind and probably mediate the attachment of the 5S RNA into the large ribosomal subunit, where it forms part of the central protuberance. In the 70S ribosome it contacts protein S13 of the 30S subunit (bridge B1b), connecting the 2 subunits; this bridge is implicated in subunit movement. Contacts the P site tRNA; the 5S rRNA and some of its associated proteins might help stabilize positioning of ribosome-bound tRNAs. The sequence is that of Large ribosomal subunit protein uL5 from Haemophilus ducreyi (strain 35000HP / ATCC 700724).